The sequence spans 64 residues: Large ribosomal subunit protein uL29 (64 aa).

This sequence belongs to the universal ribosomal protein uL29 family.

This Thiobacillus denitrificans (strain ATCC 25259 / T1) protein is Large ribosomal subunit protein uL29.